We begin with the raw amino-acid sequence, 433 residues long: Enolase (433 aa).

Positions 37-59 are disordered; that stretch reads RAAVPSGASTGEHEAVELRDGDK. The span at 47-59 shows a compositional bias: basic and acidic residues; sequence GEHEAVELRDGDK. (2R)-2-phosphoglycerate is bound at residue Gln166. Glu208 functions as the Proton donor in the catalytic mechanism. Positions 245, 291, and 318 each coordinate Mg(2+). Lys343, Arg372, Ser373, and Lys394 together coordinate (2R)-2-phosphoglycerate. The Proton acceptor role is filled by Lys343.

It belongs to the enolase family. It depends on Mg(2+) as a cofactor.

The protein resides in the cytoplasm. Its subcellular location is the secreted. It is found in the cell surface. It catalyses the reaction (2R)-2-phosphoglycerate = phosphoenolpyruvate + H2O. Its pathway is carbohydrate degradation; glycolysis; pyruvate from D-glyceraldehyde 3-phosphate: step 4/5. In terms of biological role, catalyzes the reversible conversion of 2-phosphoglycerate (2-PG) into phosphoenolpyruvate (PEP). It is essential for the degradation of carbohydrates via glycolysis. The polypeptide is Enolase (Leptospira biflexa serovar Patoc (strain Patoc 1 / Ames)).